Consider the following 99-residue polypeptide: MPKKRLIGEVLSDKMDKTVVVAVSTLVKHPRVGKYIKRTKKYYAHDENNECRVGDIVEIVESRPLSKLKRWKVERIVERSVFAEKAPEEDLEGGSNNDN.

This sequence belongs to the universal ribosomal protein uS17 family. In terms of assembly, part of the 30S ribosomal subunit.

Functionally, one of the primary rRNA binding proteins, it binds specifically to the 5'-end of 16S ribosomal RNA. This is Small ribosomal subunit protein uS17 from Thermosipho melanesiensis (strain DSM 12029 / CIP 104789 / BI429).